The following is a 175-amino-acid chain: Apoptosis regulator Bcl-2 homolog (175 aa).

The interval 37–42 (KLYITG) is mediates interaction with human NOP53 and localization to host nucleolus. The chain crosses the membrane as a helical span at residues 153–173 (MTALLGSIALLATILAAVAMS).

Belongs to the Bcl-2 family. In terms of assembly, interacts with human NOP53; may sequester ORF16 in host nucleolus and reduce its antiapoptotic activity. Interacts with ORF55.

It localises to the host membrane. Its subcellular location is the host mitochondrion. The protein localises to the host nucleus. It is found in the host nucleolus. Its function is as follows. Plays a role in the protection against apoptosis mediated by cytotoxic cells during the immune response to acute and persistent viral infection. Contributes therefore to latency establishment. Also plays a role in the inhibition of host starvation-induced autophagy which ultimately contributes to the viral chronic infection. Also participates in the viral genome replication within host nucleus. This chain is Apoptosis regulator Bcl-2 homolog (vBCL2), found in Homo sapiens (Human).